Consider the following 524-residue polypeptide: CTP synthase (524 aa).

The interval Met-1–Val-263 is amidoligase domain. Ser-13 serves as a coordination point for CTP. Residue Ser-13 participates in UTP binding. ATP-binding positions include Gly-14–Ile-19 and Asp-71. Mg(2+) contacts are provided by Asp-71 and Glu-137. CTP is bound by residues Asp-144 to Glu-146, Lys-184 to Gln-189, and Lys-220. UTP-binding positions include Lys-184–Gln-189 and Lys-220. In terms of domain architecture, Glutamine amidotransferase type-1 spans Arg-282–Gln-524. Gly-342 serves as a coordination point for L-glutamine. Cys-369 serves as the catalytic Nucleophile; for glutamine hydrolysis. L-glutamine-binding positions include Leu-370–Gln-373, Glu-393, and Arg-451. Catalysis depends on residues His-499 and Glu-501.

This sequence belongs to the CTP synthase family. As to quaternary structure, homotetramer.

The catalysed reaction is UTP + L-glutamine + ATP + H2O = CTP + L-glutamate + ADP + phosphate + 2 H(+). It carries out the reaction L-glutamine + H2O = L-glutamate + NH4(+). It catalyses the reaction UTP + NH4(+) + ATP = CTP + ADP + phosphate + 2 H(+). Its pathway is pyrimidine metabolism; CTP biosynthesis via de novo pathway; CTP from UDP: step 2/2. Allosterically activated by GTP, when glutamine is the substrate; GTP has no effect on the reaction when ammonia is the substrate. The allosteric effector GTP functions by stabilizing the protein conformation that binds the tetrahedral intermediate(s) formed during glutamine hydrolysis. Inhibited by the product CTP, via allosteric rather than competitive inhibition. Its function is as follows. Catalyzes the ATP-dependent amination of UTP to CTP with either L-glutamine or ammonia as the source of nitrogen. Regulates intracellular CTP levels through interactions with the four ribonucleotide triphosphates. This is CTP synthase from Thermotoga maritima (strain ATCC 43589 / DSM 3109 / JCM 10099 / NBRC 100826 / MSB8).